A 316-amino-acid polypeptide reads, in one-letter code: Aquaglyceroporin-2 (316 aa).

Residues 1–31 form a disordered region; the sequence is MADERGPINKSGPSSTYGATENNGESGGTRG. The Cytoplasmic segment spans residues 1–59; it reads MADERGPINKSGPSSTYGATENNGESGGTRGAPATEDVIVIQDSGWYYIKFRFKEPFAE. The segment covering 11–24 has biased composition (polar residues); that stretch reads SGPSSTYGATENNG. A helical membrane pass occupies residues 60–80; the sequence is FLGTFILVAFGVGAIAQTVLS. Over 81-86 the chain is Extracellular; it reads KGATGN. The chain crosses the membrane as a helical span at residues 87-107; it reads WITIALGFGLGLALGIAVSGH. The Cytoplasmic segment spans residues 108 to 131; that stretch reads YSGGHLNPAVTITLAIYRKFPWVK. Residues 114–116 carry the NPA 1 motif; it reads NPA. Residues 132–152 form a helical membrane-spanning segment; it reads VPVYITAQVLGAFVAAAVIYL. Over 153 to 187 the chain is Extracellular; it reads NYLPAIYNFAGDKRDVIGANATAGIFATYPQPFMS. N-linked (GlcNAc...) asparagine glycosylation occurs at Asn-172. The helical transmembrane segment at 188–208 threads the bilayer; sequence IGGAFFSEALGTFFLLFVILA. Residues 209–219 are Cytoplasmic-facing; it reads MTDERNVPTTR. A helical transmembrane segment spans residues 220-240; that stretch reads IVAPITIGLTLTAIAISLGFE. The Extracellular segment spans residues 241-271; sequence TGFSLNAARDFGPRLFTFFIGYGVEVFTAYK. The NPA 2 signature appears at 246-248; the sequence is NAA. Residues 272–292 form a helical membrane-spanning segment; that stretch reads FYFWIPLVAPIVGGLVAGFVY. At 293-316 the chain is on the cytoplasmic side; it reads DSLLYWGEKSFLNKNVHHEHRAVA.

This sequence belongs to the MIP/aquaporin (TC 1.A.8) family.

It is found in the cell membrane. The protein resides in the membrane. It carries out the reaction H2O(in) = H2O(out). The catalysed reaction is glycerol(in) = glycerol(out). With respect to regulation, polyethylene glycol (PEG) stimulates whereas glycerol inhibits the aquaporin activity. Water channel required to facilitate the transport of water across membranes. Stimulates plant drought tolerance by facilitating the transport of water from the arbuscular mycorrhiza fungus to host plants. The sequence is that of Aquaglyceroporin-2 from Rhizophagus irregularis (Arbuscular mycorrhizal fungus).